The chain runs to 79 residues: Alpha-actitoxin-Ms11a-4 (79 aa).

A signal peptide spans 1–23 (MKVLVAVLVFALLMCMFVDIAES). The propeptide occupies 24–46 (RRRDNPEYPSGLRYDEEMGVFKR). Intrachain disulfides connect cysteine 47–cysteine 61, cysteine 54–cysteine 67, and cysteine 60–cysteine 76. At tyrosine 78 the chain carries Tyrosine amide.

Its subcellular location is the secreted. The protein localises to the nematocyst. Its function is as follows. Alpha-toxins act on postsynaptic membranes, they bind to the nicotinic acetylcholine receptors (nAChR) and thus inhibit them. This toxin very weakly competes with alpha-bungarotoxin for binding to orthosteric sites on muscle-type T.carlifornicus (IC(50)=14.95 uM) and human alpha-7/CHRNA7 nAChRs (IC(50)&gt;45 uM). In Metridium senile (Brown sea anemone), this protein is Alpha-actitoxin-Ms11a-4.